Reading from the N-terminus, the 194-residue chain is dCTP deaminase, dUMP-forming (194 aa).

DCTP-binding positions include 105 to 110 (RSSMGR), D123, 131 to 133 (TLE), Q152, Y166, K174, and Q178. E133 (proton donor/acceptor) is an active-site residue.

It belongs to the dCTP deaminase family. In terms of assembly, homotrimer.

It catalyses the reaction dCTP + 2 H2O = dUMP + NH4(+) + diphosphate. It functions in the pathway pyrimidine metabolism; dUMP biosynthesis; dUMP from dCTP: step 1/1. In terms of biological role, bifunctional enzyme that catalyzes both the deamination of dCTP to dUTP and the hydrolysis of dUTP to dUMP without releasing the toxic dUTP intermediate. The chain is dCTP deaminase, dUMP-forming from Methanobrevibacter smithii (strain ATCC 35061 / DSM 861 / OCM 144 / PS).